Here is a 281-residue protein sequence, read N- to C-terminus: Clc-like protein 5 (281 aa).

The next 4 membrane-spanning stretches (helical) occupy residues 13–33 (LATL…TITP), 104–124 (VLIL…AVIF), 137–157 (IMLD…LIVF), and 184–204 (YYLA…AALV).

Belongs to the Clc family.

The protein localises to the membrane. This chain is Clc-like protein 5 (clc-5), found in Caenorhabditis elegans.